Here is a 579-residue protein sequence, read N- to C-terminus: MAGINGAGPSGAYFVGHTDPEPASGGAHGSSSGASSSNSPRLPAPPDAPASQARDRREMLLRARPLSRQTREWVAQGMPPTAEAGVPIRPQESAEAAAPQARAEERHTPEADAAASHVRTEGGRTPQALAGTSPRHTGAVPHANRIVQQLVDAGADLAGINTMIDNAMRRHAIALPSRTVQSILIEHFPHLLAGELISGSELATAFRAALRREVRQQEASAPPRTAARSSVRTPERSTVPPTSTESSSGSNQRTLLGRFAGLMTPNQRRPSSASNASASQRPVDRSPPRVNQVPTGANRVVMRNHGNNEADAALQGLAQQGVDMEDLRAALERHILHRRPIPMDIAYALQGVGIAPSIDTGESLMENPLMNLSVALHRALGPRPARAQAPRPAVPVAPATVSRRPDSARATRLQVIPAREDYENNVAYGVRLLSLNPGAGVRETVAAFVNNRYERQAVVADIRAALNLSKQFNKLRTVSKADAASNKPGFKDLADHPDDATQCLFGEELSLTSSVQQVIGLAGKATDMSESYSREANKDLVFMDMKKLAQFLAGKPEHPMTRETLNAENIAKYAFRIVP.

3 disordered regions span residues 1–140 (MAGI…TGAV), 214–294 (VRQQ…NQVP), and 384–408 (PARA…PDSA). Residues 1 to 336 (MAGINGAGPS…LRAALERHIL (336 aa)) form a host recognition; Pto interaction region. Composition is skewed to low complexity over residues 23 to 39 (ASGG…SSNS), 89 to 101 (RPQE…APQA), 219 to 248 (ASAP…ESSS), 266 to 281 (NQRR…ASQR), and 384 to 402 (PARA…ATVS). The segment at 337–579 (HRRPIPMDIA…IAKYAFRIVP (243 aa)) is E3 ubiquitin-protein ligase.

Belongs to the HopAB family. As to quaternary structure, interacts physically with plant cell Pto. Post-translationally, auto-ubiquitinated.

The protein localises to the secreted. Its function is as follows. Effector protein involved in gene-for-gene resistance in tomato plants. It is recognized by the host Pto resistance protein and elicits Pto and Prf-dependent hypersensitive response (HR) and programmed cell death (PCD), resulting in host immunity. In susceptible plants, acts as a virulence factor by suppressing PCD and HR-based plant immunity. This function requires its E3 ubiquitin ligase activity probably by recruiting E2 enzymes and transferring ubiquitin molecules to cellular proteins involved in regulation of PCD and targeting them for degradation. Enhances the development of disease symptoms and bacterial growth. The polypeptide is Effector protein HopAB3 (hopAB3) (Pseudomonas syringae pv. tomato).